A 280-amino-acid chain; its full sequence is Meiotic spindle formation protein 2 (280 aa).

The segment at 1–104 is disordered; that stretch reads MSGLDDRKKL…LPKSSPESSV (104 aa). A compositionally biased stretch (basic and acidic residues) spans 72-92; sequence LHSESKKELSRNPVSRGEEHS. A compositionally biased stretch (low complexity) spans 93–104; that stretch reads SSLPKSSPESSV.

As to quaternary structure, interacts with mei-1.

The protein localises to the cytoplasm. It localises to the cytoskeleton. Its subcellular location is the spindle pole. Functionally, forms a heterodimeric complex in conjunction with mei-1 which severs microtubules in vitro in an ATP-dependent manner. This activity may promote rapid reorganization of cellular microtubule arrays. May act to target mei-1 within the cell. Required specifically for meiotic spindle formation in the female germline. In Caenorhabditis elegans, this protein is Meiotic spindle formation protein 2 (mei-2).